The following is a 324-amino-acid chain: Acetyl-coenzyme A carboxylase carboxyl transferase subunit alpha (324 aa).

Positions 37–291 constitute a CoA carboxyltransferase C-terminal domain; the sequence is KLERRLDKLK…QNFILQEWLR (255 aa).

The protein belongs to the AccA family. As to quaternary structure, acetyl-CoA carboxylase is a heterohexamer composed of biotin carboxyl carrier protein (AccB), biotin carboxylase (AccC) and two subunits each of ACCase subunit alpha (AccA) and ACCase subunit beta (AccD).

The protein resides in the cytoplasm. It carries out the reaction N(6)-carboxybiotinyl-L-lysyl-[protein] + acetyl-CoA = N(6)-biotinyl-L-lysyl-[protein] + malonyl-CoA. It functions in the pathway lipid metabolism; malonyl-CoA biosynthesis; malonyl-CoA from acetyl-CoA: step 1/1. In terms of biological role, component of the acetyl coenzyme A carboxylase (ACC) complex. First, biotin carboxylase catalyzes the carboxylation of biotin on its carrier protein (BCCP) and then the CO(2) group is transferred by the carboxyltransferase to acetyl-CoA to form malonyl-CoA. The sequence is that of Acetyl-coenzyme A carboxylase carboxyl transferase subunit alpha from Chlamydia caviae (strain ATCC VR-813 / DSM 19441 / 03DC25 / GPIC) (Chlamydophila caviae).